Reading from the N-terminus, the 558-residue chain is Alkaline/neutral invertase CINV2 (558 aa).

Ser-16, Ser-19, and Ser-50 each carry phosphoserine. Thr-79 bears the Phosphothreonine mark. At Ser-555 the chain carries Phosphoserine.

It belongs to the glycosyl hydrolase 100 family.

Its subcellular location is the cytoplasm. The protein localises to the cytosol. It carries out the reaction Hydrolysis of terminal non-reducing beta-D-fructofuranoside residues in beta-D-fructofuranosides.. Cytosolic invertase that may cleave sucrose into glucose and fructose, and that is involved in the regulation of root growth. May regulate sugar-mediated root development by controlling sucrose catabolism in root cells. In Arabidopsis thaliana (Mouse-ear cress), this protein is Alkaline/neutral invertase CINV2.